The primary structure comprises 87 residues: Small ribosomal subunit protein uS15 (87 aa).

It belongs to the universal ribosomal protein uS15 family. Part of the 30S ribosomal subunit. Forms a bridge to the 50S subunit in the 70S ribosome, contacting the 23S rRNA.

Functionally, one of the primary rRNA binding proteins, it binds directly to 16S rRNA where it helps nucleate assembly of the platform of the 30S subunit by binding and bridging several RNA helices of the 16S rRNA. In terms of biological role, forms an intersubunit bridge (bridge B4) with the 23S rRNA of the 50S subunit in the ribosome. This is Small ribosomal subunit protein uS15 from Clostridium beijerinckii (strain ATCC 51743 / NCIMB 8052) (Clostridium acetobutylicum).